A 270-amino-acid chain; its full sequence is Putative carboxymethylenebutenolidase (270 aa).

Catalysis depends on residues Cys147, Asp204, and His236.

Belongs to the dienelactone hydrolase family.

It carries out the reaction 2-(5-oxo-2,5-dihydrofuran-2-ylidene)acetate + H2O = 4-oxohex-2-enedioate + H(+). This Salmonella typhi protein is Putative carboxymethylenebutenolidase (ysgA).